A 214-amino-acid polypeptide reads, in one-letter code: MKHVSSPHPCAAIASARVWLGLVLVALLAGCASQAPSPDQSRDRGDWEAQIERLQTLDAWSLAGKVGLRTNEGSESANIDWQQRPDTYRILISGPFGAGRTLLTGRPGAVTLTNGEGRFEAETPEALMEQQLGWSLPISALDYWVRGLPAPEGGERIEHDEQGFPQQLRQFGWTIEYRDWTRADTLWMPRRLVMTYGELRATLVANQWQLLSDT.

A signal peptide spans 1-30 (MKHVSSPHPCAAIASARVWLGLVLVALLAG). A lipid anchor (N-palmitoyl cysteine) is attached at Cys31. The S-diacylglycerol cysteine moiety is linked to residue Cys31.

This sequence belongs to the LolB family. As to quaternary structure, monomer.

It is found in the cell outer membrane. Its function is as follows. Plays a critical role in the incorporation of lipoproteins in the outer membrane after they are released by the LolA protein. This is Outer-membrane lipoprotein LolB from Chromohalobacter salexigens (strain ATCC BAA-138 / DSM 3043 / CIP 106854 / NCIMB 13768 / 1H11).